A 361-amino-acid chain; its full sequence is Chorismate synthase (361 aa).

2 residues coordinate NADP(+): Arg-48 and Arg-54. FMN is bound by residues 125-127 (RSS), 238-239 (NA), Gly-278, 293-297 (KPTSS), and Arg-319.

The protein belongs to the chorismate synthase family. Homotetramer. It depends on FMNH2 as a cofactor.

It catalyses the reaction 5-O-(1-carboxyvinyl)-3-phosphoshikimate = chorismate + phosphate. It participates in metabolic intermediate biosynthesis; chorismate biosynthesis; chorismate from D-erythrose 4-phosphate and phosphoenolpyruvate: step 7/7. Its function is as follows. Catalyzes the anti-1,4-elimination of the C-3 phosphate and the C-6 proR hydrogen from 5-enolpyruvylshikimate-3-phosphate (EPSP) to yield chorismate, which is the branch point compound that serves as the starting substrate for the three terminal pathways of aromatic amino acid biosynthesis. This reaction introduces a second double bond into the aromatic ring system. The sequence is that of Chorismate synthase from Sodalis glossinidius (strain morsitans).